A 519-amino-acid chain; its full sequence is Probable cytosol aminopeptidase (519 aa).

Mn(2+) is bound by residues K251 and D256. The active site involves K263. Residues D274, D333, and E335 each coordinate Mn(2+). The active site involves R337. The segment covering 487 to 502 (VAPAAPAAPAAPAARP) has biased composition (low complexity). The interval 487–519 (VAPAAPAAPAAPAARPAAKRTGRSQGGLKRTAP) is disordered.

This sequence belongs to the peptidase M17 family. Mn(2+) is required as a cofactor.

The protein localises to the cytoplasm. It carries out the reaction Release of an N-terminal amino acid, Xaa-|-Yaa-, in which Xaa is preferably Leu, but may be other amino acids including Pro although not Arg or Lys, and Yaa may be Pro. Amino acid amides and methyl esters are also readily hydrolyzed, but rates on arylamides are exceedingly low.. The catalysed reaction is Release of an N-terminal amino acid, preferentially leucine, but not glutamic or aspartic acids.. Its function is as follows. Presumably involved in the processing and regular turnover of intracellular proteins. Catalyzes the removal of unsubstituted N-terminal amino acids from various peptides. The protein is Probable cytosol aminopeptidase of Verminephrobacter eiseniae (strain EF01-2).